The primary structure comprises 108 residues: UPF0060 membrane protein YnfA (108 aa).

Residues 1 to 5 (MLKTT) lie on the Periplasmic side of the membrane. A helical membrane pass occupies residues 6–26 (LLFFVTALCEIIGCFLPWLWL). Over 27 to 30 (KRGA) the chain is Cytoplasmic. The chain crosses the membrane as a helical span at residues 31-51 (SMWWLLPAAASLALFVWLLTL). Topologically, residues 52 to 60 (HPAASGRVY) are periplasmic. Residues 61-81 (AAYGGVYVCTALLWLRVVDGV) form a helical membrane-spanning segment. Residues 82-84 (RLT) are Cytoplasmic-facing. A helical membrane pass occupies residues 85 to 105 (VYDWCGALIALCGMLIIVVGW). The Periplasmic portion of the chain corresponds to 106–108 (GRT).

This sequence belongs to the UPF0060 family.

The protein localises to the cell inner membrane. The sequence is that of UPF0060 membrane protein YnfA from Salmonella schwarzengrund (strain CVM19633).